Consider the following 405-residue polypeptide: Elongation factor Tu (405 aa).

A tr-type G domain is found at 10 to 215 (KPHVNVGTIG…AVDSYIPTPE (206 aa)). The segment at 19-26 (GHVDHGKT) is G1. 19 to 26 (GHVDHGKT) contributes to the GTP binding site. Threonine 26 contacts Mg(2+). The G2 stretch occupies residues 61–65 (GITIN). Positions 82 to 85 (DCPG) are G3. GTP-binding positions include 82–86 (DCPGH) and 137–140 (NKVD). Residues 137-140 (NKVD) are G4. The G5 stretch occupies residues 175–177 (SAL).

It belongs to the TRAFAC class translation factor GTPase superfamily. Classic translation factor GTPase family. EF-Tu/EF-1A subfamily. Monomer.

The protein resides in the cytoplasm. The enzyme catalyses GTP + H2O = GDP + phosphate + H(+). In terms of biological role, GTP hydrolase that promotes the GTP-dependent binding of aminoacyl-tRNA to the A-site of ribosomes during protein biosynthesis. The protein is Elongation factor Tu of Deinonema sp.